A 340-amino-acid chain; its full sequence is Biotin synthase (340 aa).

The Radical SAM core domain maps to 47–269 (SELQLSQLLS…VAVARIVCPK (223 aa)). Residues Cys-62, Cys-66, and Cys-69 each contribute to the [4Fe-4S] cluster site. 4 residues coordinate [2Fe-2S] cluster: Cys-106, Cys-137, Cys-197, and Arg-273.

The protein belongs to the radical SAM superfamily. Biotin synthase family. In terms of assembly, homodimer. It depends on [4Fe-4S] cluster as a cofactor. [2Fe-2S] cluster is required as a cofactor.

It catalyses the reaction (4R,5S)-dethiobiotin + (sulfur carrier)-SH + 2 reduced [2Fe-2S]-[ferredoxin] + 2 S-adenosyl-L-methionine = (sulfur carrier)-H + biotin + 2 5'-deoxyadenosine + 2 L-methionine + 2 oxidized [2Fe-2S]-[ferredoxin]. The protein operates within cofactor biosynthesis; biotin biosynthesis; biotin from 7,8-diaminononanoate: step 2/2. Its function is as follows. Catalyzes the conversion of dethiobiotin (DTB) to biotin by the insertion of a sulfur atom into dethiobiotin via a radical-based mechanism. This Caulobacter sp. (strain K31) protein is Biotin synthase.